The chain runs to 494 residues: Zinc finger and SCAN domain-containing protein 30 (494 aa).

The 83-residue stretch at 48-130 (RQKFRQFSYS…TMLEELEKEL (83 aa)) folds into the SCAN box domain. Residue lysine 197 forms a Glycyl lysine isopeptide (Lys-Gly) (interchain with G-Cter in SUMO2) linkage. C2H2-type zinc fingers lie at residues 301–323 (YECF…QRIH), 329–351 (YACK…QRIH), 357–379 (YECC…RRIH), 385–407 (YECG…KKIH), 413–435 (YECI…QRIH), 441–463 (YECN…QRIH), and 469–491 (YECS…QRTH).

The protein belongs to the krueppel C2H2-type zinc-finger protein family.

The protein resides in the nucleus. Its function is as follows. May be involved in transcriptional regulation. This Homo sapiens (Human) protein is Zinc finger and SCAN domain-containing protein 30 (ZSCAN30).